Reading from the N-terminus, the 490-residue chain is MGIKGLTKFLADNAPKSIQQQGIGSLLGKRVAIDASMWIYQFLAAIREGSQWGNLTNSSGESTSHINGMLSRTTRLLEAGIKPVFVFDGAPPEMKKDELTKRDERREKALAELEKAQEIGDEELIKKQSVRTIHVTKKQVEDVKKLLGFLGMPCIDAPSEAEAQCAELCKDGLVYGVVTEDADSLTFGTPIQIKQLNFSESSNKITDKSPSKQKNGMQIIKLSLILSELDINMDQFIDLCILSGCDYCGTIRGIGTSTAYKLLKKYHNIESILKNIDQTKNPIPGNFDFSKVRELFKNPLVSKNNQIKDLIKWSNPKYEELMEWLIKEQNFNEARVNSYCERIKKSKNKTSQTCLDGFFKTASNERKNTHETPSRPPLSEKQKSETRKEVDSSLSCDKKKVKIEETKIISEWGAPVSKNLSSQAEKDLAENSSEAPNQSSEIKVNKIEENKDSESSTVENTPSLQTKSPEPTMRPVKRKLNRLISESDED.

Residues 1–106 (MGIKGLTKFL…DELTKRDERR (106 aa)) form an N-domain region. Aspartate 34 lines the Mg(2+) pocket. Positions 47 and 72 each coordinate DNA. The Mg(2+) site is built by aspartate 88, glutamate 160, glutamate 162, aspartate 181, and aspartate 183. An I-domain region spans residues 124–266 (LIKKQSVRTI…STAYKLLKKY (143 aa)). Glutamate 160 is a binding site for DNA. DNA-binding residues include glycine 244 and aspartate 246. Residue aspartate 246 coordinates Mg(2+). The interaction with PCNA stretch occupies residues 351 to 359 (SQTCLDGFF). Disordered regions lie at residues 364-396 (NERKNTHETPSRPPLSEKQKSETRKEVDSSLSC) and 421-490 (SSQA…SDED). The segment covering 430 to 442 (ENSSEAPNQSSEI) has biased composition (polar residues). Residues 443–454 (KVNKIEENKDSE) are compositionally biased toward basic and acidic residues. Positions 455–469 (SSTVENTPSLQTKSP) are enriched in polar residues.

This sequence belongs to the XPG/RAD2 endonuclease family. FEN1 subfamily. Interacts with PCNA. Three molecules of FEN1 bind to one PCNA trimer with each molecule binding to one PCNA monomer. PCNA stimulates the nuclease activity without altering cleavage specificity. Mg(2+) is required as a cofactor. Post-translationally, phosphorylated. Phosphorylation upon DNA damage induces relocalization to the nuclear plasma.

It localises to the nucleus. It is found in the nucleolus. The protein resides in the nucleoplasm. The protein localises to the mitochondrion. Structure-specific nuclease with 5'-flap endonuclease and 5'-3' exonuclease activities involved in DNA replication and repair. During DNA replication, cleaves the 5'-overhanging flap structure that is generated by displacement synthesis when DNA polymerase encounters the 5'-end of a downstream Okazaki fragment. It enters the flap from the 5'-end and then tracks to cleave the flap base, leaving a nick for ligation. Also involved in the long patch base excision repair (LP-BER) pathway, by cleaving within the apurinic/apyrimidinic (AP) site-terminated flap. Acts as a genome stabilization factor that prevents flaps from equilibrating into structures that lead to duplications and deletions. Also possesses 5'-3' exonuclease activity on nicked or gapped double-stranded DNA, and exhibits RNase H activity. Also involved in replication and repair of rDNA and in repairing mitochondrial DNA. This chain is Flap endonuclease 1, found in Cryptosporidium parvum (strain Iowa II).